The primary structure comprises 345 residues: Methylthioribose-1-phosphate isomerase (345 aa).

Substrate is bound by residues 44–46, Arg-87, and Gln-194; that span reads RGA. Catalysis depends on Asp-235, which acts as the Proton donor. Residue 245-246 coordinates substrate; sequence NK.

It belongs to the eIF-2B alpha/beta/delta subunits family. MtnA subfamily.

It carries out the reaction 5-(methylsulfanyl)-alpha-D-ribose 1-phosphate = 5-(methylsulfanyl)-D-ribulose 1-phosphate. Its pathway is amino-acid biosynthesis; L-methionine biosynthesis via salvage pathway; L-methionine from S-methyl-5-thio-alpha-D-ribose 1-phosphate: step 1/6. Its function is as follows. Catalyzes the interconversion of methylthioribose-1-phosphate (MTR-1-P) into methylthioribulose-1-phosphate (MTRu-1-P). The polypeptide is Methylthioribose-1-phosphate isomerase (Heliobacterium modesticaldum (strain ATCC 51547 / Ice1)).